Consider the following 342-residue polypeptide: L-threonine 3-dehydrogenase (342 aa).

Cys-38 contributes to the Zn(2+) binding site. Catalysis depends on charge relay system residues Thr-40 and His-43. His-63, Glu-64, Cys-93, Cys-96, Cys-99, and Cys-107 together coordinate Zn(2+). Residues Ile-175, Asp-195, Arg-200, Leu-262–Ile-264, and Ile-286–Tyr-287 contribute to the NAD(+) site.

It belongs to the zinc-containing alcohol dehydrogenase family. In terms of assembly, homotetramer. The cofactor is Zn(2+).

Its subcellular location is the cytoplasm. It catalyses the reaction L-threonine + NAD(+) = (2S)-2-amino-3-oxobutanoate + NADH + H(+). The protein operates within amino-acid degradation; L-threonine degradation via oxydo-reductase pathway; glycine from L-threonine: step 1/2. Functionally, catalyzes the NAD(+)-dependent oxidation of L-threonine to 2-amino-3-ketobutyrate. The polypeptide is L-threonine 3-dehydrogenase (Burkholderia cenocepacia (strain ATCC BAA-245 / DSM 16553 / LMG 16656 / NCTC 13227 / J2315 / CF5610) (Burkholderia cepacia (strain J2315))).